Consider the following 95-residue polypeptide: Antitoxin TacA1 (95 aa).

Positions 59 to 95 are neutralization domain; it reads FNFNDEQYEEFINLLDAPVADDPVIEKLLARKPQWDV.

The protein belongs to the TacA antitoxin family. Homodimer. Forms a complex with cognate toxin TacT1. Forms a 4:2 antitoxin:toxin complex with cognate toxin TacT1.

Antitoxin component of a type II toxin-antitoxin (TA) system. Counteracts the toxic effect of cognate toxin TacT1 (T8), but not TacT2 or TacT3. Plays a role in persister cell formation. In terms of biological role, the TacA1-TacT1 complex binds (and probably represses) its own promoter DNA but not that of tacA3-tacT3, it does not repress the tacA3-tacT3 promoter. In Salmonella typhimurium (strain 14028s / SGSC 2262), this protein is Antitoxin TacA1.